The sequence spans 173 residues: Cytochrome c-type biogenesis protein CcmE (173 aa).

Topologically, residues 1 to 7 are cytoplasmic; sequence MTRKSRR. The helical; Signal-anchor for type II membrane protein transmembrane segment at 8–28 threads the bilayer; that stretch reads LILIAACGAVLALALGLILSA. Residues 29 to 173 are Periplasmic-facing; the sequence is MSGSIVFFRS…DATLGQRSER (145 aa). Residues His122 and Tyr126 each coordinate heme. Positions 134–173 are disordered; it reads ALKAQGRWQEGGGKDASKAAPKDAAKPETADATLGQRSER. Basic and acidic residues predominate over residues 145–162; that stretch reads GGKDASKAAPKDAAKPET.

Belongs to the CcmE/CycJ family.

It localises to the cell inner membrane. In terms of biological role, heme chaperone required for the biogenesis of c-type cytochromes. Transiently binds heme delivered by CcmC and transfers the heme to apo-cytochromes in a process facilitated by CcmF and CcmH. The protein is Cytochrome c-type biogenesis protein CcmE of Methylorubrum extorquens (strain CM4 / NCIMB 13688) (Methylobacterium extorquens).